We begin with the raw amino-acid sequence, 151 residues long: Deoxyuridine 5'-triphosphate nucleotidohydrolase (151 aa).

Residues 70–72 (RSG), asparagine 83, 87–89 (LID), and methionine 97 contribute to the substrate site.

The protein belongs to the dUTPase family. Mg(2+) serves as cofactor.

The enzyme catalyses dUTP + H2O = dUMP + diphosphate + H(+). The protein operates within pyrimidine metabolism; dUMP biosynthesis; dUMP from dCTP (dUTP route): step 2/2. In terms of biological role, this enzyme is involved in nucleotide metabolism: it produces dUMP, the immediate precursor of thymidine nucleotides and it decreases the intracellular concentration of dUTP so that uracil cannot be incorporated into DNA. This chain is Deoxyuridine 5'-triphosphate nucleotidohydrolase, found in Hamiltonella defensa subsp. Acyrthosiphon pisum (strain 5AT).